The sequence spans 309 residues: MMLPRLLLLVVASALPLASVAAGAVGVGEGFCSAEPSAASGGCSGVRPPLYWKATNPTLAPAHLQDLPGFTRSVYKRDHALITPESHVFSPLPDWINTLGAYLISPAIGAHFTMYLAKMHDGSKSALPPKGVERLIFVLQGSILLSEESGNTHTLLVDSYAYLPANMKHSVISDEVTTLVIFERRYTTIEGYHPDLIVGSTDKQPLLETPGEVFELRKLLPTSLPYDFNIHIMDFQPGEYLNVKEVHYNQHGLLLLEGQGIYRLGDSWYPVQSGDTIWMAPFVPQWYAALGKTKTRYLLYKDVNRDPLI.

Positions 1 to 22 (MMLPRLLLLVVASALPLASVAA) are cleaved as a signal peptide. E245, H247, H251, and Q285 together coordinate Mn(2+). E245 is a substrate binding site. 3 residues coordinate substrate: Q285, Y297, and K301.

It belongs to the UGHY family. In terms of assembly, homooctamer. Mn(2+) is required as a cofactor.

The protein localises to the endoplasmic reticulum. The catalysed reaction is (S)-2-ureidoglycine + H2O = (S)-ureidoglycolate + NH4(+). In terms of biological role, involved in the catabolism of purine nucleotides. The sequential activity of AAH, UGLYAH and UAH allows a complete purine breakdown without the intermediate generation of urea. The sequence is that of Probable (S)-ureidoglycine aminohydrolase (UGLYAH) from Oryza sativa subsp. japonica (Rice).